The chain runs to 529 residues: Glucose-6-phosphate isomerase (529 aa).

Residue glutamate 322 is the Proton donor of the active site. Active-site residues include histidine 351 and lysine 455.

This sequence belongs to the GPI family.

It localises to the cytoplasm. The catalysed reaction is alpha-D-glucose 6-phosphate = beta-D-fructose 6-phosphate. The protein operates within carbohydrate biosynthesis; gluconeogenesis. It participates in carbohydrate degradation; glycolysis; D-glyceraldehyde 3-phosphate and glycerone phosphate from D-glucose: step 2/4. Functionally, catalyzes the reversible isomerization of glucose-6-phosphate to fructose-6-phosphate. This is Glucose-6-phosphate isomerase from Thermosynechococcus vestitus (strain NIES-2133 / IAM M-273 / BP-1).